Here is a 1050-residue protein sequence, read N- to C-terminus: Zinc finger and BTB domain-containing protein 11 (1050 aa).

The span at 143-156 (LDSGEESNESEDDL) shows a compositional bias: acidic residues. The tract at residues 143 to 173 (LDSGEESNESEDDLSNFTSPPSTASKSSKKK) is disordered. A compositionally biased stretch (low complexity) spans 157–168 (SNFTSPPSTASK). The BTB domain occupies 214-282 (CDVTLLIEGE…AYTSVLSFDF (69 aa)). Disordered stretches follow at residues 373–514 (AEQN…EGGY) and 543–563 (LVQR…STEE). Residues 378 to 399 (EPEQQPAPQASPEAEASVSPVE) are compositionally biased toward low complexity. Basic and acidic residues-rich tracts occupy residues 478 to 501 (SKDE…DTYR) and 553 to 563 (PKRDAKESTEE). C2H2-type zinc fingers lie at residues 566–588 (HKCG…TLKH) and 594–616 (YKCP…LIRH). The segment at 617-641 (TRKEAPTSSSSNSTSTEASGGSSEK) is disordered. Positions 623–638 (TSSSSNSTSTEASGGS) are enriched in low complexity. C2H2-type zinc fingers lie at residues 648–670 (FICS…MLKH), 676–698 (HACQ…QSLH), 704–726 (FQCE…MSIH), 732–754 (YFCS…LKKH), 763–785 (YHCT…MNKH), 791–813 (FQCQ…VKSH), 819–843 (YRCN…KATH), 855–877 (RVCD…MNNH), 883–905 (FECL…VRTH), and 911–934 (YVCP…TKFH).

It localises to the nucleus. Its subcellular location is the nucleolus. Functionally, may be involved in transcriptional regulation. The protein is Zinc finger and BTB domain-containing protein 11 of Mus musculus (Mouse).